Here is a 54-residue protein sequence, read N- to C-terminus: Large ribosomal subunit protein bL33 (54 aa).

It belongs to the bacterial ribosomal protein bL33 family.

In Xylella fastidiosa (strain M23), this protein is Large ribosomal subunit protein bL33.